A 151-amino-acid chain; its full sequence is Large ribosomal subunit protein bL9 (151 aa).

This sequence belongs to the bacterial ribosomal protein bL9 family.

Its function is as follows. Binds to the 23S rRNA. The sequence is that of Large ribosomal subunit protein bL9 from Lactobacillus helveticus (strain DPC 4571).